The primary structure comprises 141 residues: UPF0310 protein Mflv_0785 (141 aa).

It belongs to the UPF0310 family.

The chain is UPF0310 protein Mflv_0785 from Mycolicibacterium gilvum (strain PYR-GCK) (Mycobacterium gilvum (strain PYR-GCK)).